The primary structure comprises 410 residues: Acetyltransferase aurG (410 aa).

The next 3 membrane-spanning stretches (helical) occupy residues 3–23, 28–48, and 59–79; these read LWLVLANQVGLVGTLVLVVCF, SLVRPLLLPGITALVSYGLIL, and WSLVNLNTAGLFLQYLDVGLI. Over residues 90–99 the composition is skewed to polar residues; it reads TSSRGGQPNA. Positions 90–112 are disordered; sequence TSSRGGQPNASLDLAGRKKPPSS. Asn-98 carries N-linked (GlcNAc...) asparagine glycosylation. The next 4 membrane-spanning stretches (helical) occupy residues 157-177, 219-239, 300-320, and 364-384; these read AMTLLWSVLVLDVMGLVGGDL, MYFSLQVVYSFLAIVFVMVGL, ILATFFVSGLLHLFCAEYSYG, and IGYVWVLLWFLWTSPAYFFPL.

It belongs to the wax synthase family.

It is found in the membrane. It functions in the pathway polyketide biosynthesis. Its function is as follows. Acetyltransferase; part of the gene cluster that mediates the biosynthesis of aurovertins, fungal polyketides that exhibit potent inhibition of adenosine triphosphate synthase. Tha biosynthesis starts with the HR-PKS aurA that selects propionate as the starter unit; synthesizes a hexa-ene chain through the repeated functions of the KR and DH domains in the first six iterations; selectively introduces three alpha-methyl substitutions at C4, C6, and C16 using the S-adensylmethionine-dependent cMET; and shuts off KR and DH in the last three iterations to afford a 1,3,5-triketo portion that can undergo intramolecular cyclization to yield the alpha-pyrone intermediate. AurE may act as a cyclase and enhances the rate of pyrone formation and product release of aurA. The methyltransferase aurB then methylates the C17 hydroxyl group. C17 methylation is required to initiate epoxidation by the downstream monooxygenase aurC. The monooxygenase aurC and the epoxide hydrolase aurD can iteratively transform the terminal triene portion of the methylated precursor into the dioxabicyclo[3.2.1]octane scaffold of aurovertin E. Epoxidation modifications of the precursor occur in two separate steps; bis-epoxidation of the two terminal olefins takes place first, followed by another epoxidation that occurs at C7-C8 after tetrahydrofuran formation. The O-acyltransferase aurG converts aurovertin E to aurovertin A. This is Acetyltransferase aurG from Calcarisporium arbuscula (Dendryphion arbuscula).